Here is a 121-residue protein sequence, read N- to C-terminus: Large ribosomal subunit protein uL14 (121 aa).

Belongs to the universal ribosomal protein uL14 family. As to quaternary structure, part of the 50S ribosomal subunit. Forms a cluster with proteins L3 and L19. In the 70S ribosome, L14 and L19 interact and together make contacts with the 16S rRNA in bridges B5 and B8.

In terms of biological role, binds to 23S rRNA. Forms part of two intersubunit bridges in the 70S ribosome. In Hydrogenobaculum sp. (strain Y04AAS1), this protein is Large ribosomal subunit protein uL14.